The primary structure comprises 465 residues: Glutamate--tRNA ligase (465 aa).

The short motif at 11 to 21 (PSPTGFIHLGN) is the 'HIGH' region element. A 'KMSKS' region motif is present at residues 243–247 (KMSKR). K246 lines the ATP pocket.

Belongs to the class-I aminoacyl-tRNA synthetase family. Glutamate--tRNA ligase type 1 subfamily. In terms of assembly, monomer.

It localises to the cytoplasm. The catalysed reaction is tRNA(Glu) + L-glutamate + ATP = L-glutamyl-tRNA(Glu) + AMP + diphosphate. Its function is as follows. Catalyzes the attachment of glutamate to tRNA(Glu) in a two-step reaction: glutamate is first activated by ATP to form Glu-AMP and then transferred to the acceptor end of tRNA(Glu). The polypeptide is Glutamate--tRNA ligase (Cupriavidus metallidurans (strain ATCC 43123 / DSM 2839 / NBRC 102507 / CH34) (Ralstonia metallidurans)).